The primary structure comprises 536 residues: Membrane protein insertase YidC (536 aa).

Residues 7 to 27 (IIAVVLSLFVLIGWSYLSEFM) traverse the membrane as a helical segment. The tract at residues 43–70 (VQQKASEPVAQPVQTASAPAASSFAPTE) is disordered. A compositionally biased stretch (low complexity) spans 58 to 68 (ASAPAASSFAP). 3 helical membrane passes run 346 to 366 (GNYGVAIIILTILVKLLFWPL), 415 to 435 (GGCLPMLLQIPVFLGLYQGLL), and 495 to 515 (IMMFMPVVFTFMFLNFPAGLV).

This sequence belongs to the OXA1/ALB3/YidC family. Type 1 subfamily. As to quaternary structure, interacts with the Sec translocase complex via SecD. Specifically interacts with transmembrane segments of nascent integral membrane proteins during membrane integration.

It localises to the cell inner membrane. Functionally, required for the insertion and/or proper folding and/or complex formation of integral membrane proteins into the membrane. Involved in integration of membrane proteins that insert both dependently and independently of the Sec translocase complex, as well as at least some lipoproteins. Aids folding of multispanning membrane proteins. The protein is Membrane protein insertase YidC of Oleidesulfovibrio alaskensis (strain ATCC BAA-1058 / DSM 17464 / G20) (Desulfovibrio alaskensis).